Reading from the N-terminus, the 83-residue chain is Mu-theraphotoxin-Hhn2g (83 aa).

Positions 1 to 21 are cleaved as a signal peptide; sequence MKASMYLALAGLVLLFVVGYA. A propeptide spanning residues 22–48 is cleaved from the precursor; the sequence is SESEEKEFPRELLSKIFAVDDFKGEER. 2 cysteine pairs are disulfide-bonded: cysteine 50-cysteine 65 and cysteine 57-cysteine 70. Position 81 is a leucine amide (leucine 81).

The protein belongs to the neurotoxin 10 (Hwtx-1) family. 15 (Hntx-3) subfamily. In terms of assembly, monomer. In terms of tissue distribution, expressed by the venom gland.

It is found in the secreted. In terms of biological role, lethal neurotoxin. Selectively blocks tetrodotoxin-sensitive voltage-gated sodium channels (Nav). Does not affect tetrodotoxin-resistant voltage-gated sodium channels or calcium channels. This chain is Mu-theraphotoxin-Hhn2g, found in Cyriopagopus hainanus (Chinese bird spider).